We begin with the raw amino-acid sequence, 400 residues long: MSDIISIKDIDLAKKKVFIRCDFNVPQDDFLNITDDRRIRSAIPTIRYCLDNGCSVILASHLGRPKEISSKYSLEPVAKRLARLLDKEIVMAKDVIGEDAKTKAMNLKAGEILLLENLRFEKGETKNDENLAKELASMVQVYINDAFGVCHRAHSSVEAITKFFDEKHKGAGFLLQKEIDFASNLIKHPARPFVAVVGGSKVSGKLQALTNLLPKVDKLIIGGGMAFTFLKALGYDIGNSLLEEELLEEANKILTKGKNLGVKIYLPVDVVAAPACSQDVPMKFVPAQEIPNGWMGLDIGPASVRLFKEVISDAQTIWWNGPMGVFEIDKFSKGSIKMSHYISEGHATSVVGGGDTADVVARAGDADEMTFISTGGGASLELIEGKELPGVKALRSKENE.

Residues 22–24, arginine 38, 61–64, arginine 119, and arginine 152 contribute to the substrate site; these read DFN and HLGR. ATP is bound by residues lysine 205, glycine 296, glutamate 327, and 353 to 356; that span reads GGDT.

The protein belongs to the phosphoglycerate kinase family. In terms of assembly, monomer.

Its subcellular location is the cytoplasm. It catalyses the reaction (2R)-3-phosphoglycerate + ATP = (2R)-3-phospho-glyceroyl phosphate + ADP. Its pathway is carbohydrate degradation; glycolysis; pyruvate from D-glyceraldehyde 3-phosphate: step 2/5. The protein is Phosphoglycerate kinase of Campylobacter jejuni subsp. jejuni serotype O:2 (strain ATCC 700819 / NCTC 11168).